The chain runs to 503 residues: Aspartyl/glutamyl-tRNA(Asn/Gln) amidotransferase subunit B (503 aa).

This sequence belongs to the GatB/GatE family. GatB subfamily. Heterotrimer of A, B and C subunits.

It carries out the reaction L-glutamyl-tRNA(Gln) + L-glutamine + ATP + H2O = L-glutaminyl-tRNA(Gln) + L-glutamate + ADP + phosphate + H(+). The catalysed reaction is L-aspartyl-tRNA(Asn) + L-glutamine + ATP + H2O = L-asparaginyl-tRNA(Asn) + L-glutamate + ADP + phosphate + 2 H(+). Its function is as follows. Allows the formation of correctly charged Asn-tRNA(Asn) or Gln-tRNA(Gln) through the transamidation of misacylated Asp-tRNA(Asn) or Glu-tRNA(Gln) in organisms which lack either or both of asparaginyl-tRNA or glutaminyl-tRNA synthetases. The reaction takes place in the presence of glutamine and ATP through an activated phospho-Asp-tRNA(Asn) or phospho-Glu-tRNA(Gln). In Cereibacter sphaeroides (strain ATCC 17029 / ATH 2.4.9) (Rhodobacter sphaeroides), this protein is Aspartyl/glutamyl-tRNA(Asn/Gln) amidotransferase subunit B.